The following is a 1093-amino-acid chain: Receptor-mediated endocytosis protein 6 (1093 aa).

The region spanning 156 to 389 (LKIAQVVCNL…EMMDALLVEK (234 aa)) is the Ras-GAP domain. 2 disordered regions span residues 547-610 (DLEK…GGEQ) and 643-669 (RSGSFVKPPPSGIPTSSSEQNLPDVAT). Composition is skewed to polar residues over residues 568–577 (IDFSSGSAET) and 584–598 (DSTSVSPEPLTSTEE). The 139-residue stretch at 955–1093 (HHRDKLLRGT…SAVEYIKTIL (139 aa)) folds into the VPS9 domain.

It belongs to the GAPVD1 family. In terms of assembly, interacts with GDP-bound rab-5. Interacts with alpha-adaptin.

It is found in the membrane. The protein localises to the cytoplasmic vesicle. The protein resides in the clathrin-coated vesicle. Functionally, acts both as a GTPase-activating protein (GAP) and a guanine nucleotide exchange factor (GEF), and participates in endocytosis. Acts by regulating the activation of rab-5 by exchanging bound GDP for free GTP at clathrin coated pits. In Caenorhabditis elegans, this protein is Receptor-mediated endocytosis protein 6 (rme-6).